The sequence spans 140 residues: PDZ domain-containing protein 11 (140 aa).

The 83-residue stretch at 47 to 129 (IVTLKKPPGA…ISMRVRFFPY (83 aa)) folds into the PDZ domain.

As to quaternary structure, interacts with ATP2B1, ATP2B2, ATP2B3, ATP2B4 and ATP7A. Interacts with PLEKHA7 (via WW domains) at zonula adherens; this interaction is essential for the interaction between PLEKHA7 and the ADAM10-binding protein TSPAN33. Interacts with SLC5A6.

The protein localises to the cytoplasm. It is found in the cell junction. It localises to the adherens junction. Its subcellular location is the cell membrane. In terms of biological role, mediates docking of ADAM10 to zonula adherens by interacting with PLEKHA7 which is required for PLEKHA7 to interact with the ADAM10-binding protein TSPAN33. The chain is PDZ domain-containing protein 11 (PDZD11) from Bos taurus (Bovine).